A 343-amino-acid polypeptide reads, in one-letter code: Anthranilate phosphoribosyltransferase (343 aa).

5-phospho-alpha-D-ribose 1-diphosphate contacts are provided by residues G84, 87-88, T92, 94-97, 112-120, and S124; these read GD, NIST, and KHGNRSASS. G84 serves as a coordination point for anthranilate. S96 is a Mg(2+) binding site. Residue N115 coordinates anthranilate. R170 is a binding site for anthranilate. Positions 229 and 230 each coordinate Mg(2+).

The protein belongs to the anthranilate phosphoribosyltransferase family. In terms of assembly, homodimer. The cofactor is Mg(2+).

The enzyme catalyses N-(5-phospho-beta-D-ribosyl)anthranilate + diphosphate = 5-phospho-alpha-D-ribose 1-diphosphate + anthranilate. It participates in amino-acid biosynthesis; L-tryptophan biosynthesis; L-tryptophan from chorismate: step 2/5. In terms of biological role, catalyzes the transfer of the phosphoribosyl group of 5-phosphorylribose-1-pyrophosphate (PRPP) to anthranilate to yield N-(5'-phosphoribosyl)-anthranilate (PRA). This chain is Anthranilate phosphoribosyltransferase, found in Bordetella avium (strain 197N).